We begin with the raw amino-acid sequence, 193 residues long: MAIKLIVGLGNPGQEYMFTRHNAGFWFVHHLAQQFNIALAPDKKFHGVTGRGQIHGSDVRLLMPLTFMNKSGQSVVPMVKFYGIDNDELLIAHDELDIPAGSIKLKTDGGHGGHNGLRDITPHIGNDFHRLRVGIGHPGHKSKVSGHVLSKAAPDEQIAIDSALSAAFEALPLLLDGDIEKARSQINGFKLPE.

A tRNA-binding site is contributed by tyrosine 16. Residue histidine 21 is the Proton acceptor of the active site. Residues phenylalanine 67, asparagine 69, and asparagine 115 each coordinate tRNA.

The protein belongs to the PTH family. In terms of assembly, monomer.

Its subcellular location is the cytoplasm. It catalyses the reaction an N-acyl-L-alpha-aminoacyl-tRNA + H2O = an N-acyl-L-amino acid + a tRNA + H(+). Its function is as follows. Hydrolyzes ribosome-free peptidyl-tRNAs (with 1 or more amino acids incorporated), which drop off the ribosome during protein synthesis, or as a result of ribosome stalling. Catalyzes the release of premature peptidyl moieties from peptidyl-tRNA molecules trapped in stalled 50S ribosomal subunits, and thus maintains levels of free tRNAs and 50S ribosomes. This chain is Peptidyl-tRNA hydrolase, found in Psychrobacter arcticus (strain DSM 17307 / VKM B-2377 / 273-4).